Here is a 363-residue protein sequence, read N- to C-terminus: S-adenosylmethionine:tRNA ribosyltransferase-isomerase (363 aa).

It belongs to the QueA family. As to quaternary structure, monomer.

The protein localises to the cytoplasm. The catalysed reaction is 7-aminomethyl-7-carbaguanosine(34) in tRNA + S-adenosyl-L-methionine = epoxyqueuosine(34) in tRNA + adenine + L-methionine + 2 H(+). The protein operates within tRNA modification; tRNA-queuosine biosynthesis. Transfers and isomerizes the ribose moiety from AdoMet to the 7-aminomethyl group of 7-deazaguanine (preQ1-tRNA) to give epoxyqueuosine (oQ-tRNA). This Haemophilus influenzae (strain 86-028NP) protein is S-adenosylmethionine:tRNA ribosyltransferase-isomerase.